Here is a 260-residue protein sequence, read N- to C-terminus: Indole-3-glycerol phosphate synthase (260 aa).

The protein belongs to the TrpC family.

The enzyme catalyses 1-(2-carboxyphenylamino)-1-deoxy-D-ribulose 5-phosphate + H(+) = (1S,2R)-1-C-(indol-3-yl)glycerol 3-phosphate + CO2 + H2O. The protein operates within amino-acid biosynthesis; L-tryptophan biosynthesis; L-tryptophan from chorismate: step 4/5. In Desulfotalea psychrophila (strain LSv54 / DSM 12343), this protein is Indole-3-glycerol phosphate synthase.